The primary structure comprises 171 residues: Small ribosomal subunit protein uS5 (171 aa).

The S5 DRBM domain occupies 13 to 76 (FLERLVAVNR…DQAKKNLVTI (64 aa)).

It belongs to the universal ribosomal protein uS5 family. Part of the 30S ribosomal subunit. Contacts proteins S4 and S8.

In terms of biological role, with S4 and S12 plays an important role in translational accuracy. Located at the back of the 30S subunit body where it stabilizes the conformation of the head with respect to the body. The chain is Small ribosomal subunit protein uS5 from Dichelobacter nodosus (strain VCS1703A).